The primary structure comprises 518 residues: Protein FAM98A (518 aa).

Disordered stretches follow at residues 297-415 (VLMG…GHSS) and 434-518 (GSGY…HYTS). The segment covering 302–311 (VPDRGGRPNE) has biased composition (basic and acidic residues). 3 stretches are compositionally biased toward gly residues: residues 349–364 (GGRG…GGRG), 383–396 (WTDG…GYQD), and 405–415 (QPGGYHGGHSS). The segment covering 447 to 459 (RYQDGGHHGDRGG) has biased composition (basic and acidic residues). Over residues 460-484 (GRGGRGGRGGRGGRAGQGGGWGGRG) the composition is skewed to gly residues. A compositionally biased stretch (low complexity) spans 488-504 (YHQGGQFEQHFQHGGYQ). Residues 505–518 (YNHSGFGQGRHYTS) are compositionally biased toward polar residues.

It belongs to the FAM98 family. In terms of assembly, interacts (via N- and C-terminus) with DDX1. Interacts (via N- and C-terminus) with C14orf166. Interacts with FAM98B. Interacts with PLEKHM1 (via N- and C-terminus). In terms of tissue distribution, expressed strongly in colorectal cancer cells. Expressed strongly in colorectal cancer tissues compared to wild-type colon samples (at protein level). Expressed strongly in colorectal cancer tissues compared to wild-type colon samples.

In terms of biological role, positively stimulates PRMT1-induced protein arginine methylation. Involved in skeletal homeostasis. Positively regulates lysosome peripheral distribution and ruffled border formation in osteoclasts. This Homo sapiens (Human) protein is Protein FAM98A.